The sequence spans 223 residues: Deoxyribose-phosphate aldolase (223 aa).

Catalysis depends on D89, which acts as the Proton donor/acceptor. K152 acts as the Schiff-base intermediate with acetaldehyde in catalysis. K181 (proton donor/acceptor) is an active-site residue.

It belongs to the DeoC/FbaB aldolase family. DeoC type 1 subfamily.

It localises to the cytoplasm. It carries out the reaction 2-deoxy-D-ribose 5-phosphate = D-glyceraldehyde 3-phosphate + acetaldehyde. The protein operates within carbohydrate degradation; 2-deoxy-D-ribose 1-phosphate degradation; D-glyceraldehyde 3-phosphate and acetaldehyde from 2-deoxy-alpha-D-ribose 1-phosphate: step 2/2. Its function is as follows. Catalyzes a reversible aldol reaction between acetaldehyde and D-glyceraldehyde 3-phosphate to generate 2-deoxy-D-ribose 5-phosphate. In Listeria welshimeri serovar 6b (strain ATCC 35897 / DSM 20650 / CCUG 15529 / CIP 8149 / NCTC 11857 / SLCC 5334 / V8), this protein is Deoxyribose-phosphate aldolase.